Reading from the N-terminus, the 301-residue chain is MLTFQQIILKLQSYWDAQGCALLQPYDMEVGAGTSHTATFLRALGPEPWKAAYVQPSRRPKDGRYGENPNRLQHYYQYQVVLKPAPANILELYLGSLEALGFDLKKNDIRFVEDDWENPTLGAWGLGWEVWLNGMEVTQFTYFQQVGGIDCKPITGEITYGLERLAMYLQGVDNVYNLTWTDGLSYGDVYKQNEVEQSTYNFEHSDADFLFTAFTAHEKQAKHLIGVQLALPAYEQVLKAAHSFNLLDARGAISVTERAAYIGRIRNLARAVAQSYYESRERLGFPMAPREWVEQMTKKAA.

The protein belongs to the class-II aminoacyl-tRNA synthetase family. As to quaternary structure, tetramer of two alpha and two beta subunits.

The protein resides in the cytoplasm. It catalyses the reaction tRNA(Gly) + glycine + ATP = glycyl-tRNA(Gly) + AMP + diphosphate. In Polaromonas sp. (strain JS666 / ATCC BAA-500), this protein is Glycine--tRNA ligase alpha subunit.